A 349-amino-acid chain; its full sequence is Green-sensitive opsin-1 (349 aa).

Over 1–36 (MNGTEGSNFYIPMSNRTGLVRSPYDYTQYYLAEPWK) the chain is Extracellular. 2 N-linked (GlcNAc...) asparagine glycosylation sites follow: asparagine 2 and asparagine 15. The helical transmembrane segment at 37–61 (FKALAFYMFLLIIFGFPINVLTLVV) threads the bilayer. Residues 62 to 73 (TAQHKKLRQPLN) lie on the Cytoplasmic side of the membrane. Residues 74-99 (YILVNLAFAGTIMVIFGFTVSFYCSL) form a helical membrane-spanning segment. Residues 100–113 (VGYMALGPLGCVME) are Extracellular-facing. Cysteine 110 and cysteine 187 are joined by a disulfide. A helical transmembrane segment spans residues 114–133 (GFFATLGGQVALWSLVVLAI). The Cytoplasmic portion of the chain corresponds to 134–152 (ERYIVVCKPMGSFKFSANH). Residues 153-176 (AMAGIAFTWFMACSCAVPPLFGWS) form a helical membrane-spanning segment. The Extracellular segment spans residues 177–202 (RYLPEGMQTSCGPDYYTLNPEYNNES). N-linked (GlcNAc...) asparagine glycosylation is present at asparagine 200. The chain crosses the membrane as a helical span at residues 203–230 (YVMYMFSCHFCIPVTTIFFTYGSLVCTV). The Cytoplasmic portion of the chain corresponds to 231–252 (KAAAAQQQESESTQKAEREVTR). A helical membrane pass occupies residues 253-276 (MVILMVLGFLFAWVPYASFAAWIF). Residues 277–284 (FNRGAAFS) lie on the Extracellular side of the membrane. Residues 285–309 (AQAMAVPAFFSKTSAVFNPIIYVLL) form a helical membrane-spanning segment. Lysine 296 carries the post-translational modification N6-(retinylidene)lysine. Topologically, residues 310–349 (NKQFRSCMLNTLFCGKSPLGDDESSSVSTSKTEVSSVSPA) are cytoplasmic. A disordered region spans residues 328 to 349 (LGDDESSSVSTSKTEVSSVSPA). Over residues 334–349 (SSVSTSKTEVSSVSPA) the composition is skewed to low complexity.

Belongs to the G-protein coupled receptor 1 family. Opsin subfamily. Post-translationally, phosphorylated on some or all of the serine and threonine residues present in the C-terminal region. In terms of tissue distribution, retinal double cone accessory photoreceptor cell outer segments.

It localises to the membrane. Visual pigments are the light-absorbing molecules that mediate vision. They consist of an apoprotein, opsin, covalently linked to cis-retinal. The protein is Green-sensitive opsin-1 (opn1mw1) of Danio rerio (Zebrafish).